Here is a 383-residue protein sequence, read N- to C-terminus: 1-deoxy-D-xylulose 5-phosphate reductoisomerase (383 aa).

5 residues coordinate NADPH: Thr10, Gly11, Ser12, Ile13, and Asn123. A 1-deoxy-D-xylulose 5-phosphate-binding site is contributed by Lys124. Glu125 is a binding site for NADPH. Asp149 serves as a coordination point for Mn(2+). Ser150, Glu151, Ser175, and His198 together coordinate 1-deoxy-D-xylulose 5-phosphate. Residue Glu151 participates in Mn(2+) binding. Gly204 contributes to the NADPH binding site. 1-deoxy-D-xylulose 5-phosphate-binding residues include Ser211, Asn216, Lys217, and Glu220. Glu220 is a binding site for Mn(2+).

It belongs to the DXR family. It depends on Mg(2+) as a cofactor. The cofactor is Mn(2+).

The catalysed reaction is 2-C-methyl-D-erythritol 4-phosphate + NADP(+) = 1-deoxy-D-xylulose 5-phosphate + NADPH + H(+). Its pathway is isoprenoid biosynthesis; isopentenyl diphosphate biosynthesis via DXP pathway; isopentenyl diphosphate from 1-deoxy-D-xylulose 5-phosphate: step 1/6. In terms of biological role, catalyzes the NADPH-dependent rearrangement and reduction of 1-deoxy-D-xylulose-5-phosphate (DXP) to 2-C-methyl-D-erythritol 4-phosphate (MEP). The protein is 1-deoxy-D-xylulose 5-phosphate reductoisomerase of Desulfosudis oleivorans (strain DSM 6200 / JCM 39069 / Hxd3) (Desulfococcus oleovorans).